The chain runs to 400 residues: Diphosphomevalonate decarboxylase (400 aa).

(R)-5-diphosphomevalonate is bound by residues 25–28 (YWGK), arginine 80, 155–160 (SGSACR), and threonine 211.

Belongs to the diphosphomevalonate decarboxylase family. Homodimer.

It is found in the cytoplasm. It catalyses the reaction (R)-5-diphosphomevalonate + ATP = isopentenyl diphosphate + ADP + phosphate + CO2. Its pathway is steroid biosynthesis; cholesterol biosynthesis. Catalyzes the ATP dependent decarboxylation of (R)-5-diphosphomevalonate to form isopentenyl diphosphate (IPP). Functions in the mevalonate (MVA) pathway leading to isopentenyl diphosphate (IPP), a key precursor for the biosynthesis of isoprenoids and sterol synthesis. The polypeptide is Diphosphomevalonate decarboxylase (mvd) (Danio rerio (Zebrafish)).